A 550-amino-acid polypeptide reads, in one-letter code: Arginine--tRNA ligase (550 aa).

The short motif at 130–140 (ANPTGPIHIGG) is the 'HIGH' region element.

The protein belongs to the class-I aminoacyl-tRNA synthetase family. As to quaternary structure, monomer.

The protein resides in the cytoplasm. It catalyses the reaction tRNA(Arg) + L-arginine + ATP = L-arginyl-tRNA(Arg) + AMP + diphosphate. This Mycobacterium sp. (strain KMS) protein is Arginine--tRNA ligase.